A 200-amino-acid polypeptide reads, in one-letter code: GTP cyclohydrolase-2 (200 aa).

49 to 53 (RIHSE) serves as a coordination point for GTP. Zn(2+) contacts are provided by C54, C65, and C67. Residues Q70, 92–94 (EGR), and T114 contribute to the GTP site. D126 acts as the Proton acceptor in catalysis. R128 acts as the Nucleophile in catalysis. 2 residues coordinate GTP: T149 and K154.

Belongs to the GTP cyclohydrolase II family. Zn(2+) serves as cofactor.

It catalyses the reaction GTP + 4 H2O = 2,5-diamino-6-hydroxy-4-(5-phosphoribosylamino)-pyrimidine + formate + 2 phosphate + 3 H(+). The protein operates within cofactor biosynthesis; riboflavin biosynthesis; 5-amino-6-(D-ribitylamino)uracil from GTP: step 1/4. Functionally, catalyzes the conversion of GTP to 2,5-diamino-6-ribosylamino-4(3H)-pyrimidinone 5'-phosphate (DARP), formate and pyrophosphate. This chain is GTP cyclohydrolase-2, found in Saccharophagus degradans (strain 2-40 / ATCC 43961 / DSM 17024).